A 297-amino-acid chain; its full sequence is Carboxysome assembly protein CcmO (297 aa).

A disordered region spans residues 1 to 29 (MPTSPTMTSVPIARSPRPSYQQINQHQPS). Residues 18-29 (PSYQQINQHQPS) show a composition bias toward polar residues. BMC domains lie at 32–116 (ALGL…AVFP) and 138–222 (SIGL…HTLP).

It belongs to the bacterial microcompartments protein family. Homooligomerizes, possibly as a trimer, interacts with CcmK in the carboxysome.

The protein resides in the carboxysome. Required for formation of the carboxysome, a polyhedral inclusion where RuBisCO (ribulose bisphosphate carboxylase, rbcL-rbcS) is sequestered. Required for recruitment of major shell protein CcmK2 to the pre-carboxysome. Suggested to be a carboxysome shell protein. The protein is Carboxysome assembly protein CcmO of Synechocystis sp. (strain ATCC 27184 / PCC 6803 / Kazusa).